Here is a 731-residue protein sequence, read N- to C-terminus: 1,4-alpha-glucan branching enzyme GlgB 2 (731 aa).

The active-site Nucleophile is Asp410. Glu463 acts as the Proton donor in catalysis.

The protein belongs to the glycosyl hydrolase 13 family. GlgB subfamily. Monomer.

The catalysed reaction is Transfers a segment of a (1-&gt;4)-alpha-D-glucan chain to a primary hydroxy group in a similar glucan chain.. Its pathway is glycan biosynthesis; glycogen biosynthesis. Catalyzes the formation of the alpha-1,6-glucosidic linkages in glycogen by scission of a 1,4-alpha-linked oligosaccharide from growing alpha-1,4-glucan chains and the subsequent attachment of the oligosaccharide to the alpha-1,6 position. The polypeptide is 1,4-alpha-glucan branching enzyme GlgB 2 (Xanthomonas oryzae pv. oryzae (strain MAFF 311018)).